We begin with the raw amino-acid sequence, 137 residues long: Profilin-3 (137 aa).

The protein belongs to the profilin family. As to quaternary structure, interacts with ACTRT3. Testis specific.

Its subcellular location is the cytoplasm. The protein localises to the cytoskeleton. It is found in the nucleus. Its function is as follows. Binds to actin and affects the structure of the cytoskeleton. Slightly reduces actin polymerization. Binds to poly-L-proline, phosphatidylinositol 3-phosphate (PtdIns(3)P), phosphatidylinositol 4,5-bisphosphate (PtdIns(4,5)P2) and phosphatidylinositol 4-phosphate (PtdIns(4)P). May be involved in spermatogenesis. This is Profilin-3 (PFN3) from Homo sapiens (Human).